The following is a 432-amino-acid chain: Fibrinogen gamma chain (432 aa).

Positions 1 to 24 are cleaved as a signal peptide; sequence MGRIGTPVFLAFLSALTCSLQVHA. One can recognise a Fibrinogen C-terminal domain in the interval 169-412; sequence KISPITGKDC…MTTMKLLPMG (244 aa). Residues C178 and C207 are joined by a disulfide bond. A glycan (N-linked (GlcNAc...) asparagine) is linked at N227. 4 residues coordinate Ca(2+): D340, D342, Y344, and G346. C348 and C361 are disulfide-bonded. The disordered stretch occupies residues 413–432; the sequence is RDLSGHGGQQQSKGNSRGDN. Residues 421 to 432 are compositionally biased toward polar residues; it reads QQQSKGNSRGDN.

Heterohexamer; disulfide linked. Contains 2 sets of 3 non-identical chains (alpha, beta and gamma). The 2 heterotrimers are in head to head conformation with the N-termini in a small central domain. Conversion of fibrinogen to fibrin is triggered by thrombin, which cleaves fibrinopeptides A and B from alpha and beta chains, and thus exposes the N-terminal polymerization sites responsible for the formation of the soft clot. The soft clot is converted into the hard clot by factor XIIIA which catalyzes the epsilon-(gamma-glutamyl)lysine cross-linking between gamma chains (stronger) and between alpha chains (weaker) of different monomers.

It localises to the secreted. Together with fibrinogen alpha (FGA) and fibrinogen beta (FGB), polymerizes to form an insoluble fibrin matrix. Has a major function in hemostasis as one of the primary components of blood clots. This Petromyzon marinus (Sea lamprey) protein is Fibrinogen gamma chain (FGG).